We begin with the raw amino-acid sequence, 358 residues long: 4-hydroxy-3-methylbut-2-en-1-yl diphosphate synthase (flavodoxin) (358 aa).

Residues cysteine 270, cysteine 273, cysteine 305, and glutamate 312 each contribute to the [4Fe-4S] cluster site.

The protein belongs to the IspG family. [4Fe-4S] cluster is required as a cofactor.

It catalyses the reaction (2E)-4-hydroxy-3-methylbut-2-enyl diphosphate + oxidized [flavodoxin] + H2O + 2 H(+) = 2-C-methyl-D-erythritol 2,4-cyclic diphosphate + reduced [flavodoxin]. Its pathway is isoprenoid biosynthesis; isopentenyl diphosphate biosynthesis via DXP pathway; isopentenyl diphosphate from 1-deoxy-D-xylulose 5-phosphate: step 5/6. Converts 2C-methyl-D-erythritol 2,4-cyclodiphosphate (ME-2,4cPP) into 1-hydroxy-2-methyl-2-(E)-butenyl 4-diphosphate. This Ruthia magnifica subsp. Calyptogena magnifica protein is 4-hydroxy-3-methylbut-2-en-1-yl diphosphate synthase (flavodoxin).